We begin with the raw amino-acid sequence, 234 residues long: 1-(5-phosphoribosyl)-5-[(5-phosphoribosylamino)methylideneamino] imidazole-4-carboxamide isomerase (234 aa).

Residue aspartate 9 is the Proton acceptor of the active site. Aspartate 131 serves as the catalytic Proton donor.

Belongs to the HisA/HisF family.

The protein localises to the cytoplasm. It carries out the reaction 1-(5-phospho-beta-D-ribosyl)-5-[(5-phospho-beta-D-ribosylamino)methylideneamino]imidazole-4-carboxamide = 5-[(5-phospho-1-deoxy-D-ribulos-1-ylimino)methylamino]-1-(5-phospho-beta-D-ribosyl)imidazole-4-carboxamide. Its pathway is amino-acid biosynthesis; L-histidine biosynthesis; L-histidine from 5-phospho-alpha-D-ribose 1-diphosphate: step 4/9. The polypeptide is 1-(5-phosphoribosyl)-5-[(5-phosphoribosylamino)methylideneamino] imidazole-4-carboxamide isomerase (Staphylococcus aureus (strain JH1)).